The primary structure comprises 226 residues: Fibrillarin-like rRNA/tRNA 2'-O-methyltransferase (226 aa).

Residues 82–83 (TT), 100–101 (EF), 125–126 (DA), and 145–148 (DVAQ) contribute to the S-adenosyl-L-methionine site.

This sequence belongs to the methyltransferase superfamily. Fibrillarin family. In terms of assembly, interacts with nop5. Component of box C/D small ribonucleoprotein (sRNP) particles that contain rpl7ae, FlpA and nop5, plus a guide RNA.

Functionally, involved in pre-rRNA and tRNA processing. Utilizes the methyl donor S-adenosyl-L-methionine to catalyze the site-specific 2'-hydroxyl methylation of ribose moieties in rRNA and tRNA. Site specificity is provided by a guide RNA that base pairs with the substrate. Methylation occurs at a characteristic distance from the sequence involved in base pairing with the guide RNA. The chain is Fibrillarin-like rRNA/tRNA 2'-O-methyltransferase from Methanosarcina barkeri (strain Fusaro / DSM 804).